The following is a 279-amino-acid chain: Diaminopimelate epimerase (279 aa).

Substrate contacts are provided by Asn11 and Asn63. Cys72 (proton donor) is an active-site residue. Residues 73 to 74, Asn161, Asn194, and 212 to 213 contribute to the substrate site; these read GN and ER. The active-site Proton acceptor is Cys221. 222-223 serves as a coordination point for substrate; sequence GT.

Belongs to the diaminopimelate epimerase family. In terms of assembly, homodimer.

The protein localises to the cytoplasm. It carries out the reaction (2S,6S)-2,6-diaminopimelate = meso-2,6-diaminopimelate. Its pathway is amino-acid biosynthesis; L-lysine biosynthesis via DAP pathway; DL-2,6-diaminopimelate from LL-2,6-diaminopimelate: step 1/1. Its function is as follows. Catalyzes the stereoinversion of LL-2,6-diaminopimelate (L,L-DAP) to meso-diaminopimelate (meso-DAP), a precursor of L-lysine and an essential component of the bacterial peptidoglycan. This Moorella thermoacetica (strain ATCC 39073 / JCM 9320) protein is Diaminopimelate epimerase.